We begin with the raw amino-acid sequence, 922 residues long: Isoleucine--tRNA ligase (922 aa).

The 'HIGH' region signature appears at 57 to 67; sequence PYANGDIHLGH. Glu553 provides a ligand contact to L-isoleucyl-5'-AMP. Positions 594–598 match the 'KMSKS' region motif; sequence KMSKS. Lys597 is an ATP binding site. Zn(2+) is bound by residues Cys892, Cys895, Cys912, and Cys915.

Belongs to the class-I aminoacyl-tRNA synthetase family. IleS type 1 subfamily. In terms of assembly, monomer. Requires Zn(2+) as cofactor.

It localises to the cytoplasm. The catalysed reaction is tRNA(Ile) + L-isoleucine + ATP = L-isoleucyl-tRNA(Ile) + AMP + diphosphate. Functionally, catalyzes the attachment of isoleucine to tRNA(Ile). As IleRS can inadvertently accommodate and process structurally similar amino acids such as valine, to avoid such errors it has two additional distinct tRNA(Ile)-dependent editing activities. One activity is designated as 'pretransfer' editing and involves the hydrolysis of activated Val-AMP. The other activity is designated 'posttransfer' editing and involves deacylation of mischarged Val-tRNA(Ile). This is Isoleucine--tRNA ligase from Desulfitobacterium hafniense (strain DSM 10664 / DCB-2).